The chain runs to 313 residues: Aspartate carbamoyltransferase catalytic subunit (313 aa).

Residues Arg-58 and Thr-59 each coordinate carbamoyl phosphate. Lys-86 provides a ligand contact to L-aspartate. The carbamoyl phosphate site is built by Arg-108, His-136, and Gln-139. L-aspartate is bound by residues Arg-169 and Arg-223. Carbamoyl phosphate is bound by residues Gly-264 and Pro-265.

The protein belongs to the aspartate/ornithine carbamoyltransferase superfamily. ATCase family. In terms of assembly, heterododecamer (2C3:3R2) of six catalytic PyrB chains organized as two trimers (C3), and six regulatory PyrI chains organized as three dimers (R2).

The catalysed reaction is carbamoyl phosphate + L-aspartate = N-carbamoyl-L-aspartate + phosphate + H(+). It functions in the pathway pyrimidine metabolism; UMP biosynthesis via de novo pathway; (S)-dihydroorotate from bicarbonate: step 2/3. Catalyzes the condensation of carbamoyl phosphate and aspartate to form carbamoyl aspartate and inorganic phosphate, the committed step in the de novo pyrimidine nucleotide biosynthesis pathway. This is Aspartate carbamoyltransferase catalytic subunit from Ruminiclostridium cellulolyticum (strain ATCC 35319 / DSM 5812 / JCM 6584 / H10) (Clostridium cellulolyticum).